The chain runs to 284 residues: Bifunctional protein FolD (284 aa).

Residues 166–168 (GAS) and isoleucine 232 contribute to the NADP(+) site.

The protein belongs to the tetrahydrofolate dehydrogenase/cyclohydrolase family. As to quaternary structure, homodimer.

It catalyses the reaction (6R)-5,10-methylene-5,6,7,8-tetrahydrofolate + NADP(+) = (6R)-5,10-methenyltetrahydrofolate + NADPH. The enzyme catalyses (6R)-5,10-methenyltetrahydrofolate + H2O = (6R)-10-formyltetrahydrofolate + H(+). The protein operates within one-carbon metabolism; tetrahydrofolate interconversion. In terms of biological role, catalyzes the oxidation of 5,10-methylenetetrahydrofolate to 5,10-methenyltetrahydrofolate and then the hydrolysis of 5,10-methenyltetrahydrofolate to 10-formyltetrahydrofolate. The sequence is that of Bifunctional protein FolD from Pseudomonas entomophila (strain L48).